A 128-amino-acid chain; its full sequence is UPF0102 protein KPN78578_35270 (128 aa).

The tract at residues 1–20 is disordered; sequence MAQVPAGKNRSGQLSKQTGD.

This sequence belongs to the UPF0102 family.

The protein is UPF0102 protein KPN78578_35270 of Klebsiella pneumoniae subsp. pneumoniae (strain ATCC 700721 / MGH 78578).